A 471-amino-acid polypeptide reads, in one-letter code: Argininosuccinate lyase (471 aa).

Belongs to the lyase 1 family. Argininosuccinate lyase subfamily.

It is found in the cytoplasm. The catalysed reaction is 2-(N(omega)-L-arginino)succinate = fumarate + L-arginine. It functions in the pathway amino-acid biosynthesis; L-arginine biosynthesis; L-arginine from L-ornithine and carbamoyl phosphate: step 3/3. This chain is Argininosuccinate lyase, found in Acidiphilium cryptum (strain JF-5).